A 92-amino-acid polypeptide reads, in one-letter code: MNKQYSYPLDLSWSTEELASVLSFFNDVEAAYEGKVEAKKLLDSYKGFKAVVPSKSEEKRLGREFETVSGYSLYRAVQAAKEKGKGKISLGK.

Belongs to the UPF0223 family.

The sequence is that of UPF0223 protein SPCG_1392 from Streptococcus pneumoniae (strain CGSP14).